A 442-amino-acid polypeptide reads, in one-letter code: Trigger factor (442 aa).

The PPIase FKBP-type domain maps to 162 to 247 (GDRMTFDFEG…VKAIESRELP (86 aa)).

It belongs to the FKBP-type PPIase family. Tig subfamily.

It localises to the cytoplasm. The enzyme catalyses [protein]-peptidylproline (omega=180) = [protein]-peptidylproline (omega=0). In terms of biological role, involved in protein export. Acts as a chaperone by maintaining the newly synthesized protein in an open conformation. Functions as a peptidyl-prolyl cis-trans isomerase. This is Trigger factor from Magnetococcus marinus (strain ATCC BAA-1437 / JCM 17883 / MC-1).